Reading from the N-terminus, the 202-residue chain is Dual-action ribosomal maturation protein DarP (202 aa).

A compositionally biased stretch (low complexity) spans 1-13 (MPPMTRNTRNNPN). The interval 1 to 39 (MPPMTRNTRNNPNGRFPGAFAPEDEDDLPKSKSQRKRDM) is disordered.

This sequence belongs to the DarP family.

The protein localises to the cytoplasm. In terms of biological role, member of a network of 50S ribosomal subunit biogenesis factors which assembles along the 30S-50S interface, preventing incorrect 23S rRNA structures from forming. Promotes peptidyl transferase center (PTC) maturation. The protein is Dual-action ribosomal maturation protein DarP of Cupriavidus metallidurans (strain ATCC 43123 / DSM 2839 / NBRC 102507 / CH34) (Ralstonia metallidurans).